Consider the following 156-residue polypeptide: MSKKVTDTVQEMAQPIVDSLQLELVDIEFVKEGQSWFLRVFIDSDDGVDIEECAKVSEALSEKLDEADPISQNYFLEVSSPGAERPLKKKADFEKSLGKNVYIKTYEPIDGVKVFEGELAEFDGQTVTVEITIKTRKKRINIPYEKIANARLAVTF.

It belongs to the RimP family.

The protein localises to the cytoplasm. Its function is as follows. Required for maturation of 30S ribosomal subunits. The protein is Ribosome maturation factor RimP of Bacillus subtilis (strain 168).